The chain runs to 557 residues: Potassium-transporting ATPase potassium-binding subunit (557 aa).

The next 12 membrane-spanning stretches (helical) occupy residues 5 to 25, 63 to 83, 132 to 152, 170 to 190, 253 to 273, 283 to 303, 329 to 349, 356 to 376, 379 to 399, 416 to 436, 484 to 504, and 526 to 546; these read GFLL…PLGS, LCAI…MLLG, GLTV…FALI, LLRI…LFFI, FVQM…FGEV, LLWA…WAEV, VLVS…AVIA, ALGG…FGGV, GLYG…LMIG, LTAL…ALAM, LLAF…MAIA, and LFVG…FIPA.

Belongs to the KdpA family. As to quaternary structure, the system is composed of three essential subunits: KdpA, KdpB and KdpC.

It is found in the cell inner membrane. Its function is as follows. Part of the high-affinity ATP-driven potassium transport (or Kdp) system, which catalyzes the hydrolysis of ATP coupled with the electrogenic transport of potassium into the cytoplasm. This subunit binds the periplasmic potassium ions and delivers the ions to the membrane domain of KdpB through an intramembrane tunnel. The chain is Potassium-transporting ATPase potassium-binding subunit from Escherichia coli O9:H4 (strain HS).